A 426-amino-acid polypeptide reads, in one-letter code: Serine--tRNA ligase (426 aa).

230–232 (TAE) serves as a coordination point for L-serine. 261 to 263 (RSE) lines the ATP pocket. Glu-284 contacts L-serine. 348–351 (EISS) is a binding site for ATP. Ser-384 is a binding site for L-serine.

Belongs to the class-II aminoacyl-tRNA synthetase family. Type-1 seryl-tRNA synthetase subfamily. As to quaternary structure, homodimer. The tRNA molecule binds across the dimer.

It localises to the cytoplasm. The enzyme catalyses tRNA(Ser) + L-serine + ATP = L-seryl-tRNA(Ser) + AMP + diphosphate + H(+). The catalysed reaction is tRNA(Sec) + L-serine + ATP = L-seryl-tRNA(Sec) + AMP + diphosphate + H(+). The protein operates within aminoacyl-tRNA biosynthesis; selenocysteinyl-tRNA(Sec) biosynthesis; L-seryl-tRNA(Sec) from L-serine and tRNA(Sec): step 1/1. Catalyzes the attachment of serine to tRNA(Ser). Is also able to aminoacylate tRNA(Sec) with serine, to form the misacylated tRNA L-seryl-tRNA(Sec), which will be further converted into selenocysteinyl-tRNA(Sec). This chain is Serine--tRNA ligase, found in Phenylobacterium zucineum (strain HLK1).